Reading from the N-terminus, the 262-residue chain is Acyl-[acyl-carrier-protein]--UDP-N-acetylglucosamine O-acyltransferase (262 aa).

This sequence belongs to the transferase hexapeptide repeat family. LpxA subfamily. As to quaternary structure, homotrimer.

It localises to the cytoplasm. The catalysed reaction is a (3R)-hydroxyacyl-[ACP] + UDP-N-acetyl-alpha-D-glucosamine = a UDP-3-O-[(3R)-3-hydroxyacyl]-N-acetyl-alpha-D-glucosamine + holo-[ACP]. It participates in glycolipid biosynthesis; lipid IV(A) biosynthesis; lipid IV(A) from (3R)-3-hydroxytetradecanoyl-[acyl-carrier-protein] and UDP-N-acetyl-alpha-D-glucosamine: step 1/6. Involved in the biosynthesis of lipid A, a phosphorylated glycolipid that anchors the lipopolysaccharide to the outer membrane of the cell. This chain is Acyl-[acyl-carrier-protein]--UDP-N-acetylglucosamine O-acyltransferase, found in Vibrio vulnificus (strain CMCP6).